The primary structure comprises 302 residues: Glutaminase (302 aa).

Substrate-binding residues include Ser61, Asn111, Glu155, Asn162, Tyr186, Tyr238, and Val256.

This sequence belongs to the glutaminase family. As to quaternary structure, homotetramer.

It carries out the reaction L-glutamine + H2O = L-glutamate + NH4(+). This Pseudomonas aeruginosa (strain ATCC 15692 / DSM 22644 / CIP 104116 / JCM 14847 / LMG 12228 / 1C / PRS 101 / PAO1) protein is Glutaminase.